The sequence spans 496 residues: Bifunctional protein HldE (496 aa).

The interval 1–331 (MDPTPALAEI…AAVHQEEVSA (331 aa)) is ribokinase. Residue 206–209 (NRKE) coordinates ATP. Residue aspartate 276 is part of the active site. Positions 358–496 (FTNGCFDLLH…GGSRRSGDTL (139 aa)) are cytidylyltransferase.

This sequence in the N-terminal section; belongs to the carbohydrate kinase PfkB family. The protein in the C-terminal section; belongs to the cytidylyltransferase family. In terms of assembly, homodimer.

The catalysed reaction is D-glycero-beta-D-manno-heptose 7-phosphate + ATP = D-glycero-beta-D-manno-heptose 1,7-bisphosphate + ADP + H(+). It carries out the reaction D-glycero-beta-D-manno-heptose 1-phosphate + ATP + H(+) = ADP-D-glycero-beta-D-manno-heptose + diphosphate. It functions in the pathway nucleotide-sugar biosynthesis; ADP-L-glycero-beta-D-manno-heptose biosynthesis; ADP-L-glycero-beta-D-manno-heptose from D-glycero-beta-D-manno-heptose 7-phosphate: step 1/4. Its pathway is nucleotide-sugar biosynthesis; ADP-L-glycero-beta-D-manno-heptose biosynthesis; ADP-L-glycero-beta-D-manno-heptose from D-glycero-beta-D-manno-heptose 7-phosphate: step 3/4. Catalyzes the phosphorylation of D-glycero-D-manno-heptose 7-phosphate at the C-1 position to selectively form D-glycero-beta-D-manno-heptose-1,7-bisphosphate. Functionally, catalyzes the ADP transfer from ATP to D-glycero-beta-D-manno-heptose 1-phosphate, yielding ADP-D-glycero-beta-D-manno-heptose. The protein is Bifunctional protein HldE of Rhodospirillum rubrum (strain ATCC 11170 / ATH 1.1.1 / DSM 467 / LMG 4362 / NCIMB 8255 / S1).